The sequence spans 83 residues: Apolipoprotein C-I, basic form (83 aa).

Positions 1–26 (MRLFLSLPVLVVVLSMVLEGPAPAQG) are cleaved as a signal peptide.

Belongs to the apolipoprotein C1 family.

It localises to the secreted. Functionally, inhibitor of lipoprotein binding to the low density lipoprotein (LDL) receptor, LDL receptor-related protein, and very low density lipoprotein (VLDL) receptor. Associates with high density lipoproteins (HDL) and the triacylglycerol-rich lipoproteins in the plasma and makes up about 10% of the protein of the VLDL and 2% of that of HDL. Appears to interfere directly with fatty acid uptake and is also the major plasma inhibitor of cholesteryl ester transfer protein (CETP). Binds free fatty acids and reduces their intracellular esterification. Modulates the interaction of APOE with beta-migrating VLDL and inhibits binding of beta-VLDL to the LDL receptor-related protein. The protein is Apolipoprotein C-I, basic form (APOC1B) of Cercocebus atys (Sooty mangabey).